A 492-amino-acid chain; its full sequence is Zinc finger protein 385B (492 aa).

2 Matrin-type zinc fingers span residues 8 to 44 (KKLLYSLCDVCNIQLHSAAQAQVHYNGKSHLKRVKQL) and 143 to 173 (ISCNICQLRFNSDSQAEAHYKGSKHAKKLKA). The disordered stretch occupies residues 159–206 (EAHYKGSKHAKKLKAQESPKNKQKSAVAQDSGTKTITSTSTNTTTTTT). Over residues 189-206 (SGTKTITSTSTNTTTTTT) the composition is skewed to low complexity. 2 Matrin-type zinc fingers span residues 303–337 (KKLLYCSLCKVAVNSLSQLEAHNTGSKHKTMLEAR) and 371–401 (FHCEICDVHVNSEIQLKQHISSRRHKDRVAG). Positions 388–420 (QHISSRRHKDRVAGKPTKPKYSPYNKQQRSSSS) are disordered.

The protein localises to the nucleus. May play a role in p53/TP53-mediated apoptosis. The sequence is that of Zinc finger protein 385B (znf385b) from Danio rerio (Zebrafish).